The primary structure comprises 85 residues: uncharacterized protein (85 aa).

An N-terminal signal peptide occupies residues 1 to 35; it reads MIEDPSKKISLWQKWINVDPKKRILFSLGLFALSA.

Its subcellular location is the secreted. This is an uncharacterized protein from Dictyostelium discoideum (Social amoeba).